A 172-amino-acid polypeptide reads, in one-letter code: Male-specific submandibular salivary gland protein (172 aa).

The first 15 residues, 1–15, serve as a signal peptide directing secretion; that stretch reads MVKFLLLALALGVSC. A glycan (N-linked (GlcNAc...) asparagine) is linked at Asn41. Cystine bridges form between Cys60/Cys64 and Cys79/Cys170.

It belongs to the calycin superfamily. Lipocalin family. Post-translationally, N-glycosylated. Expressed in acinar cells of the submandibular salivary gland from where it is secreted into saliva (at protein level). Also released from the submandibular salivary gland into blood and excreted in urine (at protein level). Expressed in the lacrimal gland from where it is secreted into tears (at protein level).

It localises to the secreted. The protein resides in the cytoplasm. This is Male-specific submandibular salivary gland protein from Mesocricetus auratus (Golden hamster).